We begin with the raw amino-acid sequence, 258 residues long: Cruciform cutting endonuclease 1, mitochondrial (258 aa).

Positions 1-35 (MATVKLSFLQHICKLTGLSRSGRKDELLRRIVDSP) constitute an SAP domain. Residues Asp-46 and Asp-230 each contribute to the Mg(2+) site.

In terms of assembly, homodimer.

Its subcellular location is the mitochondrion. It catalyses the reaction Endonucleolytic cleavage at a junction such as a reciprocal single-stranded crossover between two homologous DNA duplexes (Holliday junction).. Functionally, capable of resolving Holliday junctions. Specific for 4-way junctions. Seems to be important for the maintenance of mitochondrial DNA. Cleaves fixed junctions at the point of strand exchange. Cleaves after 5'-CT-3' and 5'-TT-3' sequences. The polypeptide is Cruciform cutting endonuclease 1, mitochondrial (cce1) (Schizosaccharomyces pombe (strain 972 / ATCC 24843) (Fission yeast)).